The sequence spans 125 residues: Morphine 6-dehydrogenase (125 aa).

NADP(+)-binding positions include 9–18 (GHSIPVLGFI) and 74–111 (SALG…IERE).

Belongs to the aldo/keto reductase family. As to quaternary structure, monomer. Post-translationally, the N-terminus is blocked.

The protein localises to the cytoplasm. It carries out the reaction morphine + NAD(+) = morphinone + NADH + H(+). The catalysed reaction is morphine + NADP(+) = morphinone + NADPH + H(+). With respect to regulation, strongly inhibited by sulfhydryl reagents and quercetin, but not by pyrazole, barbital and indomethacine. In terms of biological role, catalyzes the dehydrogenation of morphine to morphinone. Uses both NAD and NADP, but the activity is much greater with NAD than with NADP. This Oryctolagus cuniculus (Rabbit) protein is Morphine 6-dehydrogenase.